Consider the following 795-residue polypeptide: MTAFNSLFSLDKKRLKKLQRTLNTINSLKGQMATLSNEELQAKTTEFRKRLVNGETLDDICAEAFAVVREADKRVLGLFPYDVQVIGGLVLHQGNTAEMKTGEGKTLTATMPLYLNALEGKGAMLLTNNSYLAIRDAEEMGKVYRFLGLSVGVGVSDNEEEDRDAATKRAVYSSDIVYSTSSALGFDYLIDNLASSKSQKYMPKLHYAIVDEADAVLLDMAQTPLVISGSPRVQSNLYKIADELILSFEEQVDYYFDKERQEVWIKNQGVREAERYFRIPHFYKQSNRELVRHLNLSLKAHKLFERGKDYVVDDGEIKLLDATNGRVLEGTKLQGGVHQAIEQKEHLNVTPESRAMASITYQNLFRMFTKLAGMTGTGKTAEKEFIEVYDMEVVRIPTNSPVRRIDYPDKIYTTLPEKIHATIEFVKQVHDTGQPILLVAGSVRMSELFSELLLLSGIPHSLLNAQSAVKEAQMIAEAGQKGAVTVATNMAGRGTDIKLGKGVSELGGLAVIGTERMKSQRMDLQLRGRSGRQGDIGFSQFFVSFEDDLMIESGPKWAQDYFRKNRDKVNPEKPKALGQRRFQKLFQQTQEASDGKGESARSQTIEFDSSVQLQREYVYRERNALINGESGHFSPRQIIDTVISSFIAYLDGEVEKEELIFEVNRFIFDNMSYNLQGISKEMSLEEIKNYLFKIADEILREKHNLLGDSFGDFERTAALKAIDEAWIEEVDYLQQLRTVATARQTAQRNPVFEYHKEAYKSYNIMKKEIREQTFRNLLLSEVSFNENGDLQIYFI.

ATP is bound by residues Gln-84, 102 to 106 (GEGKT), and Asp-496.

The protein belongs to the SecA family. As to quaternary structure, monomer and homodimer. Part of the essential Sec protein translocation apparatus which comprises SecA, SecYEG and auxiliary proteins SecDF. Other proteins may also be involved.

It is found in the cell membrane. The protein resides in the cytoplasm. It carries out the reaction ATP + H2O + cellular proteinSide 1 = ADP + phosphate + cellular proteinSide 2.. Functionally, part of the Sec protein translocase complex. Interacts with the SecYEG preprotein conducting channel. Has a central role in coupling the hydrolysis of ATP to the transfer of proteins into and across the cell membrane, serving as an ATP-driven molecular motor driving the stepwise translocation of polypeptide chains across the membrane. The chain is Protein translocase subunit SecA 2 from Streptococcus agalactiae serotype III (strain NEM316).